A 218-amino-acid chain; its full sequence is Embryonic polyadenylate-binding protein 2-A (218 aa).

Residues 1 to 16 (MSERVSEEPGLDKGDG) show a composition bias toward basic and acidic residues. Disordered regions lie at residues 1–26 (MSERVSEEPGLDKGDGAEECELDDPE) and 169–218 (RTNM…NHPY). Residues 93 to 170 (RSVYVGNVDY…RTIKVLPKRT (78 aa)) enclose the RRM domain. The segment covering 205–218 (FRGCGRPGPLNHPY) has biased composition (low complexity).

It localises to the cytoplasm. Functionally, binds the poly(A) tail of mRNA. Unable to interact with the cap-binding complex and is therefore unlikely to be involved in translation initiation. This Xenopus laevis (African clawed frog) protein is Embryonic polyadenylate-binding protein 2-A (Pabpn1l-a).